Consider the following 295-residue polypeptide: Protein U26 (295 aa).

Helical transmembrane passes span 4–24 (LTDS…LYTF), 31–51 (SPLG…LTFK), 66–86 (IVFL…VVMI), 103–123 (VMIM…SLFF), 183–203 (FTVE…FLSM), 218–238 (VFFK…ILSG), 243–263 (VCLY…SIML), and 274–294 (FYAG…MYFG).

Its subcellular location is the membrane. In Human herpesvirus 6A (strain Uganda-1102) (HHV-6 variant A), this protein is Protein U26 (U26).